The sequence spans 114 residues: Aspartate 1-decarboxylase (114 aa).

The active-site Schiff-base intermediate with substrate; via pyruvic acid is serine 25. Serine 25 is modified (pyruvic acid (Ser)). Threonine 57 lines the substrate pocket. Tyrosine 58 serves as the catalytic Proton donor. 71-73 (GAA) is a binding site for substrate.

Belongs to the PanD family. Heterooctamer of four alpha and four beta subunits. It depends on pyruvate as a cofactor. Post-translationally, is synthesized initially as an inactive proenzyme, which is activated by self-cleavage at a specific serine bond to produce a beta-subunit with a hydroxyl group at its C-terminus and an alpha-subunit with a pyruvoyl group at its N-terminus.

The protein localises to the cytoplasm. The catalysed reaction is L-aspartate + H(+) = beta-alanine + CO2. It participates in cofactor biosynthesis; (R)-pantothenate biosynthesis; beta-alanine from L-aspartate: step 1/1. Its function is as follows. Catalyzes the pyruvoyl-dependent decarboxylation of aspartate to produce beta-alanine. The polypeptide is Aspartate 1-decarboxylase (Campylobacter hominis (strain ATCC BAA-381 / DSM 21671 / CCUG 45161 / LMG 19568 / NCTC 13146 / CH001A)).